The primary structure comprises 752 residues: Glutamate carboxypeptidase 2 (752 aa).

Residues 1–22 (MWNALQDRDSAEVLGHRQRWLR) are Cytoplasmic-facing. The residue at position 10 (serine 10) is a Phosphoserine. A helical; Signal-anchor for type II membrane protein membrane pass occupies residues 23–44 (VGTLVLALTGTFLIGFLFGWFI). Residues 45 to 752 (KPSNEATGNV…AAAETLREVA (708 aa)) lie on the Extracellular side of the membrane. Residues asparagine 78, asparagine 123, and asparagine 155 are each glycosylated (N-linked (GlcNAc...) asparagine). Substrate is bound by residues arginine 212 and asparagine 259. Residues threonine 271 and tyrosine 274 each contribute to the Ca(2+) site. Positions 276-589 (ANEHAYRHEL…QVRGAMVFEL (314 aa)) are NAALADase. A glycan (N-linked (GlcNAc...) asparagine) is linked at asparagine 338. The Zn(2+) site is built by histidine 379 and aspartate 389. A substrate-binding site is contributed by glutamate 426. The Nucleophile; for NAALADase activity role is filled by glutamate 426. Glutamate 427 contributes to the Zn(2+) binding site. Positions 435 and 438 each coordinate Ca(2+). Aspartate 455 provides a ligand contact to Zn(2+). Residues asparagine 461 and asparagine 478 are each glycosylated (N-linked (GlcNAc...) asparagine). Residues 519 to 520 (SG), asparagine 521, 536 to 538 (RAR), tyrosine 554, and 554 to 555 (YH) contribute to the substrate site. Histidine 555 contacts Zn(2+). Residue asparagine 615 is glycosylated (N-linked (GlcNAc...) asparagine). Serine 630 serves as the catalytic Charge relay system. A glycan (N-linked (GlcNAc...) asparagine) is linked at asparagine 640. Catalysis depends on charge relay system residues aspartate 668 and histidine 691. Residue 701–702 (KY) coordinates substrate. Residue asparagine 722 is glycosylated (N-linked (GlcNAc...) asparagine).

It belongs to the peptidase M28 family. M28B subfamily. As to quaternary structure, homodimer. Requires Zn(2+) as cofactor. In terms of tissue distribution, expressed predominantly in the hippocampal region of the brain and in kidney. Lower levels in the ovary, testis and mandibular gland.

It localises to the cell membrane. The enzyme catalyses Release of an unsubstituted, C-terminal glutamyl residue, typically from Ac-Asp-Glu or folylpoly-gamma-glutamates.. The NAALADase and folate hydrolase activities are inhibited by quisqualic acid. In terms of biological role, has both folate hydrolase and N-acetylated-alpha-linked-acidic dipeptidase (NAALADase) activity. Has a preference for tri-alpha-glutamate peptides. In the intestine, required for the uptake of folate. In the brain, modulates excitatory neurotransmission through the hydrolysis of the neuropeptide, N-aceylaspartylglutamate (NAAG), thereby releasing glutamate. Functionally, also exhibits a dipeptidyl-peptidase IV type activity. In vitro, cleaves Gly-Pro-AMC. This chain is Glutamate carboxypeptidase 2 (Folh1), found in Mus musculus (Mouse).